Consider the following 158-residue polypeptide: Cyclic pyranopterin monophosphate synthase (158 aa).

Substrate-binding positions include 75 to 77 (LCH) and 113 to 114 (ME). Residue aspartate 128 is part of the active site.

Belongs to the MoaC family. As to quaternary structure, homohexamer; trimer of dimers.

It carries out the reaction (8S)-3',8-cyclo-7,8-dihydroguanosine 5'-triphosphate = cyclic pyranopterin phosphate + diphosphate. It participates in cofactor biosynthesis; molybdopterin biosynthesis. Catalyzes the conversion of (8S)-3',8-cyclo-7,8-dihydroguanosine 5'-triphosphate to cyclic pyranopterin monophosphate (cPMP). The sequence is that of Cyclic pyranopterin monophosphate synthase from Histophilus somni (strain 2336) (Haemophilus somnus).